The chain runs to 1057 residues: Carbamoyl phosphate synthase large chain (1057 aa).

Positions 1-401 are carboxyphosphate synthetic domain; that stretch reads MPKRNDIKTI…SLLKAIRSLE (401 aa). ATP contacts are provided by arginine 129, arginine 169, glycine 175, glycine 176, lysine 208, isoleucine 210, glutamate 215, glycine 241, isoleucine 242, histidine 243, glutamine 284, and glutamate 298. One can recognise an ATP-grasp 1 domain in the interval 133–327; it reads RNLMNELNEP…IAKLAAKIAV (195 aa). Mg(2+) is bound by residues glutamine 284, glutamate 298, and asparagine 300. Mn(2+) contacts are provided by glutamine 284, glutamate 298, and asparagine 300. The oligomerization domain stretch occupies residues 402-546; that stretch reads YGVHHLGLPN…YGTYETENES (145 aa). The carbamoyl phosphate synthetic domain stretch occupies residues 547–929; it reads IRSDKKKVVV…ALYKGLVASG (383 aa). In terms of domain architecture, ATP-grasp 2 spans 671–861; sequence EALMQRIEIP…MANLAMKAIL (191 aa). 10 residues coordinate ATP: arginine 707, arginine 746, leucine 748, glutamate 752, glycine 777, valine 778, histidine 779, serine 780, glutamine 820, and glutamate 832. Glutamine 820, glutamate 832, and asparagine 834 together coordinate Mg(2+). Residues glutamine 820, glutamate 832, and asparagine 834 each contribute to the Mn(2+) site. The region spanning 930–1057 is the MGS-like domain; it reads LQVKDHGTVL…ESMTFNMNQM (128 aa). An allosteric domain region spans residues 930–1057; it reads LQVKDHGTVL…ESMTFNMNQM (128 aa).

It belongs to the CarB family. As to quaternary structure, composed of two chains; the small (or glutamine) chain promotes the hydrolysis of glutamine to ammonia, which is used by the large (or ammonia) chain to synthesize carbamoyl phosphate. Tetramer of heterodimers (alpha,beta)4. It depends on Mg(2+) as a cofactor. Requires Mn(2+) as cofactor.

It carries out the reaction hydrogencarbonate + L-glutamine + 2 ATP + H2O = carbamoyl phosphate + L-glutamate + 2 ADP + phosphate + 2 H(+). The catalysed reaction is hydrogencarbonate + NH4(+) + 2 ATP = carbamoyl phosphate + 2 ADP + phosphate + 2 H(+). Its pathway is amino-acid biosynthesis; L-arginine biosynthesis; carbamoyl phosphate from bicarbonate: step 1/1. It functions in the pathway pyrimidine metabolism; UMP biosynthesis via de novo pathway; (S)-dihydroorotate from bicarbonate: step 1/3. Its function is as follows. Large subunit of the glutamine-dependent carbamoyl phosphate synthetase (CPSase). CPSase catalyzes the formation of carbamoyl phosphate from the ammonia moiety of glutamine, carbonate, and phosphate donated by ATP, constituting the first step of 2 biosynthetic pathways, one leading to arginine and/or urea and the other to pyrimidine nucleotides. The large subunit (synthetase) binds the substrates ammonia (free or transferred from glutamine from the small subunit), hydrogencarbonate and ATP and carries out an ATP-coupled ligase reaction, activating hydrogencarbonate by forming carboxy phosphate which reacts with ammonia to form carbamoyl phosphate. This is Carbamoyl phosphate synthase large chain from Macrococcus caseolyticus (strain JCSC5402) (Macrococcoides caseolyticum).